A 462-amino-acid chain; its full sequence is GTPase Der (462 aa).

2 consecutive EngA-type G domains span residues 3–166 (PVIA…TTET) and 175–348 (IKIA…HSAI). Residues 9 to 16 (GRPNVGKS), 56 to 60 (DTGGI), 118 to 121 (NKTD), 181 to 188 (GRPNVGKS), 228 to 232 (DTAGV), and 293 to 296 (NKWD) contribute to the GTP site. In terms of domain architecture, KH-like spans 349-433 (QSFSTPKLTR…PLKIEFKGGQ (85 aa)).

The protein belongs to the TRAFAC class TrmE-Era-EngA-EngB-Septin-like GTPase superfamily. EngA (Der) GTPase family. In terms of assembly, associates with the 50S ribosomal subunit.

GTPase that plays an essential role in the late steps of ribosome biogenesis. This Legionella pneumophila (strain Paris) protein is GTPase Der.